Consider the following 241-residue polypeptide: Purine nucleoside phosphorylase DeoD-type 1 (241 aa).

Residue histidine 5 coordinates a purine D-ribonucleoside. Phosphate is bound by residues glycine 21, arginine 25, arginine 44, and 88-91; that span reads RVGS. A purine D-ribonucleoside-binding positions include 180-182 and 204-205; these read EME and SD. Aspartate 205 serves as the catalytic Proton donor.

Belongs to the PNP/UDP phosphorylase family. As to quaternary structure, homohexamer; trimer of homodimers.

The enzyme catalyses a purine D-ribonucleoside + phosphate = a purine nucleobase + alpha-D-ribose 1-phosphate. It catalyses the reaction a purine 2'-deoxy-D-ribonucleoside + phosphate = a purine nucleobase + 2-deoxy-alpha-D-ribose 1-phosphate. In terms of biological role, catalyzes the reversible phosphorolytic breakdown of the N-glycosidic bond in the beta-(deoxy)ribonucleoside molecules, with the formation of the corresponding free purine bases and pentose-1-phosphate. The protein is Purine nucleoside phosphorylase DeoD-type 1 of Photobacterium profundum (strain SS9).